The following is a 223-amino-acid chain: Cytidylate kinase (223 aa).

Residue 10–18 coordinates ATP; that stretch reads GPASSGKST.

The protein belongs to the cytidylate kinase family. Type 1 subfamily.

It is found in the cytoplasm. The enzyme catalyses CMP + ATP = CDP + ADP. It catalyses the reaction dCMP + ATP = dCDP + ADP. This is Cytidylate kinase from Streptococcus pneumoniae serotype 4 (strain ATCC BAA-334 / TIGR4).